Reading from the N-terminus, the 56-residue chain is Ribosome biogenesis protein Nop10 (56 aa).

This sequence belongs to the NOP10 family.

In terms of biological role, involved in ribosome biogenesis; more specifically in 18S rRNA pseudouridylation and in cleavage of pre-rRNA. The sequence is that of Ribosome biogenesis protein Nop10 from Saccharolobus islandicus (strain Y.N.15.51 / Yellowstone #2) (Sulfolobus islandicus).